The following is a 79-amino-acid chain: Acyl carrier protein (79 aa).

One can recognise a Carrier domain in the interval Asp2–Val77. Position 37 is an O-(pantetheine 4'-phosphoryl)serine (Ser37).

The protein belongs to the acyl carrier protein (ACP) family. Post-translationally, 4'-phosphopantetheine is transferred from CoA to a specific serine of apo-ACP by AcpS. This modification is essential for activity because fatty acids are bound in thioester linkage to the sulfhydryl of the prosthetic group.

Its subcellular location is the cytoplasm. Its pathway is lipid metabolism; fatty acid biosynthesis. In terms of biological role, carrier of the growing fatty acid chain in fatty acid biosynthesis. The protein is Acyl carrier protein of Cupriavidus pinatubonensis (strain JMP 134 / LMG 1197) (Cupriavidus necator (strain JMP 134)).